We begin with the raw amino-acid sequence, 1795 residues long: Putative surface cell antigen sca2 (1795 aa).

A signal peptide spans 1–33 (MNLQNSHSKKYVLTFFMSTCLLTSSFLSTSARA). A compositionally biased stretch (polar residues) spans 360–373 (FLNNNDTTKPSTGR). 3 disordered regions span residues 360-391 (FLNN…SNQS), 664-709 (LEQT…SSNS), and 1354-1441 (KQEN…DEEL). A compositionally biased stretch (pro residues) spans 672 to 700 (PNPPPLPLNGGIPNPPPLPLNGSMPPPPL). 2 stretches are compositionally biased toward basic and acidic residues: residues 1364–1383 (SSTK…EQSD) and 1398–1409 (SKNDKSSDDKKS). Acidic residues predominate over residues 1417–1432 (DEDDTGYATDEEELEE). Positions 1516 to 1795 (ETSINRGVWI…QGLIKLKVNL (280 aa)) constitute an Autotransporter domain.

It localises to the cell outer membrane. The protein is Putative surface cell antigen sca2 (sca2) of Rickettsia conorii (strain ATCC VR-613 / Malish 7).